The following is an 81-amino-acid chain: ATP synthase subunit c, chloroplastic (81 aa).

Helical transmembrane passes span Pro-3 to Gly-23 and Leu-53 to Ala-73.

The protein belongs to the ATPase C chain family. In terms of assembly, F-type ATPases have 2 components, F(1) - the catalytic core - and F(0) - the membrane proton channel. F(1) has five subunits: alpha(3), beta(3), gamma(1), delta(1), epsilon(1). F(0) has four main subunits: a(1), b(1), b'(1) and c(10-14). The alpha and beta chains form an alternating ring which encloses part of the gamma chain. F(1) is attached to F(0) by a central stalk formed by the gamma and epsilon chains, while a peripheral stalk is formed by the delta, b and b' chains.

It localises to the plastid. The protein localises to the chloroplast thylakoid membrane. In terms of biological role, f(1)F(0) ATP synthase produces ATP from ADP in the presence of a proton or sodium gradient. F-type ATPases consist of two structural domains, F(1) containing the extramembraneous catalytic core and F(0) containing the membrane proton channel, linked together by a central stalk and a peripheral stalk. During catalysis, ATP synthesis in the catalytic domain of F(1) is coupled via a rotary mechanism of the central stalk subunits to proton translocation. Functionally, key component of the F(0) channel; it plays a direct role in translocation across the membrane. A homomeric c-ring of between 10-14 subunits forms the central stalk rotor element with the F(1) delta and epsilon subunits. In Huperzia lucidula (Shining clubmoss), this protein is ATP synthase subunit c, chloroplastic.